A 217-amino-acid polypeptide reads, in one-letter code: Non-structural protein NS3 (217 aa).

Belongs to the orbivirus NS3 family.

In terms of biological role, may play a role in the release of virions from infected cells. This African horse sickness virus 9 (AHSV-9) protein is Non-structural protein NS3 (Segment-10).